The following is a 251-amino-acid chain: Ditrans,polycis-undecaprenyl-diphosphate synthase ((2E,6E)-farnesyl-diphosphate specific) (251 aa).

The active site involves Asp29. Asp29 is a Mg(2+) binding site. Residues 30–33, Trp34, Arg42, His46, and 74–76 contribute to the substrate site; these read GNGK and SSD. Catalysis depends on Asn77, which acts as the Proton acceptor. Residues Trp78, Arg80, Arg197, and 203–205 contribute to the substrate site; that span reads RLS. Glu216 serves as a coordination point for Mg(2+).

The protein belongs to the UPP synthase family. Homodimer. It depends on Mg(2+) as a cofactor.

The enzyme catalyses 8 isopentenyl diphosphate + (2E,6E)-farnesyl diphosphate = di-trans,octa-cis-undecaprenyl diphosphate + 8 diphosphate. Its function is as follows. Catalyzes the sequential condensation of isopentenyl diphosphate (IPP) with (2E,6E)-farnesyl diphosphate (E,E-FPP) to yield (2Z,6Z,10Z,14Z,18Z,22Z,26Z,30Z,34E,38E)-undecaprenyl diphosphate (di-trans,octa-cis-UPP). UPP is the precursor of glycosyl carrier lipid in the biosynthesis of bacterial cell wall polysaccharide components such as peptidoglycan and lipopolysaccharide. The sequence is that of Ditrans,polycis-undecaprenyl-diphosphate synthase ((2E,6E)-farnesyl-diphosphate specific) from Buchnera aphidicola subsp. Baizongia pistaciae (strain Bp).